Here is a 790-residue protein sequence, read N- to C-terminus: Disintegrin and metalloproteinase domain-containing protein 30 (790 aa).

A signal peptide spans 1-27 (MRSVQIFLSQCRLLLLLVPTMLLKSLG). Residues 28 to 198 (EDVIFHPEGE…KARLRDFPGS (171 aa)) constitute a propeptide that is removed on maturation. Residues 170–177 (QVCGLSDD) carry the Cysteine switch motif. Zn(2+) is bound at residue cysteine 172. Residues 199–687 (YKHPKYLELI…LRGAIPSSIW (489 aa)) are Extracellular-facing. The Peptidase M12B domain occupies 203–393 (KYLELILLFD…SGATCLNNIP (191 aa)). The N-linked (GlcNAc...) asparagine glycan is linked to asparagine 222. 3 cysteine pairs are disulfide-bonded: cysteine 313-cysteine 388, cysteine 353-cysteine 373, and cysteine 355-cysteine 361. Residue histidine 338 coordinates Zn(2+). Glutamate 339 is a catalytic residue. Positions 342 and 348 each coordinate Zn(2+). N-linked (GlcNAc...) asparagine glycosylation is found at asparagine 372, asparagine 438, asparagine 473, and asparagine 625. The 87-residue stretch at 399–485 (LKRCGNKIVE…SCPNDVYKQD (87 aa)) folds into the Disintegrin domain. Cysteines 457 and 477 form a disulfide. Residues 629–663 (LQFDCLPEKCNTRGVCNNRKNCHCMYGWAPPFCEE) enclose the EGF-like domain. Disulfide bonds link cysteine 633-cysteine 644, cysteine 638-cysteine 650, and cysteine 652-cysteine 661. The helical transmembrane segment at 688-708 (VVSIIMFRLILLILSVVFVFF) threads the bilayer. Over 709 to 790 (RQVIGNHLKP…KAKSVKKQKK (82 aa)) the chain is Cytoplasmic. Positions 720 to 779 (QEKMPLSKAKTEQEESKTKTVQEESKTKTGQEESEAKTGQEESKAKTGQEESKANIESKR) are enriched in basic and acidic residues. The segment at 720–790 (QEKMPLSKAK…KAKSVKKQKK (71 aa)) is disordered. 5 repeat units span residues 732 to 740 (QEESKTKTV), 741 to 749 (QEESKTKTG), 750 to 758 (QEESEAKTG), 759 to 767 (QEESKAKTG), and 768 to 776 (QEESKANIE). Residues 732 to 776 (QEESKTKTVQEESKTKTGQEESEAKTGQEESKAKTGQEESKANIE) form a 5 X 9 AA approximate repeats region. Basic residues predominate over residues 780 to 790 (PKAKSVKKQKK).

In terms of assembly, interacts with CTSD; this leads to activation of CTSD. The cofactor is Zn(2+). Expressed in brain neurons (at protein level). Expressed in testis.

The protein resides in the late endosome membrane. Functionally, plays a role in lysosomal amyloid precursor protein (APP) processing by cleaving and activating CTSD/cathepsin D which leads to APP degradation. This is Disintegrin and metalloproteinase domain-containing protein 30 (ADAM30) from Homo sapiens (Human).